Reading from the N-terminus, the 196-residue chain is Blue copper protein (196 aa).

Positions 1-22 are cleaved as a signal peptide; it reads MAGVFKTVTFLVLVFAAVVVFA. The region spanning 23–125 is the Phytocyanin domain; the sequence is EDYDVGDDTE…GQKLSITVVA (103 aa). A Cu cation-binding site is contributed by H66. C79 and C113 are disulfide-bonded. An N-linked (GlcNAc...) asparagine glycan is attached at N98. The Cu cation site is built by C107, H112, and Q117. The interval 133–173 is disordered; the sequence is TPGAGATPAPGSTPSTGGTTPPTAGGTTTPSGSSGTTTPAG. Positions 135–173 are enriched in low complexity; it reads GAGATPAPGSTPSTGGTTPPTAGGTTTPSGSSGTTTPAG. N174 carries GPI-anchor amidated asparagine lipidation. A propeptide spans 175–196 (removed in mature form); that stretch reads AASSLGGATFLVAFVSAVVALF.

The protein resides in the cell membrane. In terms of biological role, probably acts as an electron carrier. This is Blue copper protein (BCB) from Arabidopsis thaliana (Mouse-ear cress).